The primary structure comprises 365 residues: S-adenosylmethionine:tRNA ribosyltransferase-isomerase (365 aa).

This sequence belongs to the QueA family. In terms of assembly, monomer.

It localises to the cytoplasm. The catalysed reaction is 7-aminomethyl-7-carbaguanosine(34) in tRNA + S-adenosyl-L-methionine = epoxyqueuosine(34) in tRNA + adenine + L-methionine + 2 H(+). The protein operates within tRNA modification; tRNA-queuosine biosynthesis. In terms of biological role, transfers and isomerizes the ribose moiety from AdoMet to the 7-aminomethyl group of 7-deazaguanine (preQ1-tRNA) to give epoxyqueuosine (oQ-tRNA). This is S-adenosylmethionine:tRNA ribosyltransferase-isomerase from Rickettsia conorii (strain ATCC VR-613 / Malish 7).